An 817-amino-acid polypeptide reads, in one-letter code: Protein hunchback (817 aa).

Disordered stretches follow at residues 51-77, 93-132, and 187-252; these read PGTINPHHQHPQQHSSMMASQPQHSPL, HNGGGAHHLQFSDNSGAMTPSPNTNVGGQDFGFESNTSSA, and YSQQ…EDQD. Positions 62–76 are enriched in low complexity; it reads QQHSSMMASQPQHSP. Over residues 103–119 the composition is skewed to polar residues; the sequence is FSDNSGAMTPSPNTNVG. The segment covering 189–201 has biased composition (low complexity); it reads QQQQQQQQRQLQQ. 4 consecutive C2H2-type zinc fingers follow at residues 287-309, 316-338, 344-366, and 372-396; these read HKCKSCGMVAITKMAFWEHARTH, LQCPKCPFVTELKHHLEYHIRKH, FQCDKCSYSCVNKSMLNSHRKSH, and YRCADCDYATKYCHSFKLHLRKYEH. Disordered stretches follow at residues 456-477, 491-513, 564-619, and 666-758; these read PLQQQQQPQQPASPAKSSSSVA, QNLAQQQQQQQQSPGAQSHSSQQ, QLQQ…QQTP, and APTS…AGNS. A compositionally biased stretch (low complexity) spans 564–576; sequence QLQQQQQNKQANE. Positions 577-595 are enriched in acidic residues; that stretch reads NGEEDEEDNDEVDEDEEEF. A compositionally biased stretch (polar residues) spans 680–694; it reads MPPTTSSPIHPSQVN. Residues 721–758 are compositionally biased toward low complexity; the sequence is PTTANTSASSTASSSGNSSNSSSTSTSSNSNSSSAGNS. 2 C2H2-type zinc fingers span residues 764 to 786 and 792 to 816; these read YECKYCDIFFKDAVLYTIHMGYH and FKCNMCGEKCDGPVGLFVHMARNAH.

The protein belongs to the hunchback C2H2-type zinc-finger protein family.

The protein localises to the nucleus. Functionally, gap class segmentation protein that controls development of head structures. The protein is Protein hunchback (hb) of Musca domestica (House fly).